The chain runs to 284 residues: 2-dehydro-3-deoxyphosphooctonate aldolase (284 aa).

Belongs to the KdsA family.

Its subcellular location is the cytoplasm. The enzyme catalyses D-arabinose 5-phosphate + phosphoenolpyruvate + H2O = 3-deoxy-alpha-D-manno-2-octulosonate-8-phosphate + phosphate. It participates in carbohydrate biosynthesis; 3-deoxy-D-manno-octulosonate biosynthesis; 3-deoxy-D-manno-octulosonate from D-ribulose 5-phosphate: step 2/3. The protein operates within bacterial outer membrane biogenesis; lipopolysaccharide biosynthesis. The chain is 2-dehydro-3-deoxyphosphooctonate aldolase from Escherichia coli O157:H7.